The sequence spans 140 residues: TPT1-like protein (140 aa).

Positions 6–140 constitute a TCTP domain; the sequence is MITYWDLISH…LANFKNYQKT (135 aa).

It belongs to the TCTP family.

The polypeptide is TPT1-like protein (Homo sapiens (Human)).